Consider the following 279-residue polypeptide: Lysozyme-like protein 2 (279 aa).

Residues 1-19 (MIKLLVSFTILFVLSSARP) form the signal peptide. Residues 47–265 (MGNAVDFSFP…AAAPKTEVNM (219 aa)) form the Ch-type lysozyme domain.

Belongs to the glycosyl hydrolase 25 family. In terms of tissue distribution, expressed in intestine.

Functionally, involved in resistance to Gram-positive bacteria P.aeruginosa or B.thuringiensis infection. This chain is Lysozyme-like protein 2, found in Caenorhabditis elegans.